Reading from the N-terminus, the 246-residue chain is uncharacterized protein (246 aa).

The next 4 helical transmembrane spans lie at threonine 32–isoleucine 52, isoleucine 69–phenylalanine 89, isoleucine 121–isoleucine 141, and leucine 146–cysteine 166. 2 consecutive 4Fe-4S ferredoxin-type domains span residues phenylalanine 185–lysine 213 and isoleucine 210–phenylalanine 239. [4Fe-4S] cluster-binding residues include cysteine 194, cysteine 197, cysteine 200, cysteine 204, cysteine 219, cysteine 222, cysteine 225, and cysteine 229.

The protein resides in the cell membrane. This is an uncharacterized protein from Methanocaldococcus jannaschii (strain ATCC 43067 / DSM 2661 / JAL-1 / JCM 10045 / NBRC 100440) (Methanococcus jannaschii).